An 835-amino-acid polypeptide reads, in one-letter code: Invasin (835 aa).

The region spanning 451–541 (VITSEVTDDG…QQATVDVRFA (91 aa)) is the Big-1 domain.

It belongs to the intimin/invasin family.

It is found in the cell outer membrane. In terms of biological role, invasin is a protein that allows enteric bacteria to penetrate cultured mammalian cells. The entry of invasin in the cell is mediated by binding several beta-1 chain integrins. This is Invasin from Yersinia enterocolitica.